A 105-amino-acid chain; its full sequence is Large ribosomal subunit protein uL24 (105 aa).

This sequence belongs to the universal ribosomal protein uL24 family. As to quaternary structure, part of the 50S ribosomal subunit.

In terms of biological role, one of two assembly initiator proteins, it binds directly to the 5'-end of the 23S rRNA, where it nucleates assembly of the 50S subunit. One of the proteins that surrounds the polypeptide exit tunnel on the outside of the subunit. The sequence is that of Large ribosomal subunit protein uL24 from Mycolicibacterium smegmatis (strain ATCC 700084 / mc(2)155) (Mycobacterium smegmatis).